The primary structure comprises 582 residues: External alternative NAD(P)H-ubiquinone oxidoreductase B2, mitochondrial (582 aa).

A mitochondrion-targeting transit peptide spans 1–38 (MRNFSVFERFSKAFKDHPSLTRILVVSTISGGGLIAYS). 60–90 (KVVLLGTGWAGTSFLKNLNNSQYEVQIISPR) serves as a coordination point for FAD. 223–259 (LHFVVVGGGPTGVEFAAELHDFVTEDLVSLYPRAKGS) lines the NAD(+) pocket. The 36-residue stretch at 379 to 414 (KVMEDVSAIFSKADKDKSGTLTLKEFQEAMDDICVR) folds into the EF-hand domain. Residues Asp392, Asp394, Ser396, Thr398, and Glu403 each contribute to the Ca(2+) site. The Microbody targeting signal motif lies at 573–582 (FIFGRDSSSI).

Belongs to the NADH dehydrogenase family. Requires FAD as cofactor. Mostly expressed in seedlings and roots and, to a lower extent, in cotyledons, leaves, stems, buds and flowers.

It localises to the mitochondrion inner membrane. The protein resides in the peroxisome. It carries out the reaction a quinone + NADH + H(+) = a quinol + NAD(+). The enzyme catalyses a ubiquinone + NADH + H(+) = a ubiquinol + NAD(+). NADPH oxidase activity is stimulated by calcium ions. In terms of biological role, alternative NADH-ubiquinone oxidoreductase which catalyzes the oxidation of mitochondrial NADH does not translocate protons across the inner mitochondrial membrane. Calcium-dependent NAD(P)H dehydrogenase; more efficient on NADH. Binds calcium ions. This chain is External alternative NAD(P)H-ubiquinone oxidoreductase B2, mitochondrial (NDB2), found in Arabidopsis thaliana (Mouse-ear cress).